A 325-amino-acid polypeptide reads, in one-letter code: tRNA dimethylallyltransferase (325 aa).

Residue 17–24 (GPTASGKT) coordinates ATP. Residue 19 to 24 (TASGKT) coordinates substrate. 4 interaction with substrate tRNA regions span residues 42–45 (DSAL), 166–170 (QRIQR), 251–256 (RCVGYR), and 284–291 (KRQITWLR).

It belongs to the IPP transferase family. In terms of assembly, monomer. Mg(2+) serves as cofactor.

The enzyme catalyses adenosine(37) in tRNA + dimethylallyl diphosphate = N(6)-dimethylallyladenosine(37) in tRNA + diphosphate. Its function is as follows. Catalyzes the transfer of a dimethylallyl group onto the adenine at position 37 in tRNAs that read codons beginning with uridine, leading to the formation of N6-(dimethylallyl)adenosine (i(6)A). This chain is tRNA dimethylallyltransferase, found in Burkholderia multivorans (strain ATCC 17616 / 249).